The sequence spans 253 residues: Imidazole glycerol phosphate synthase subunit HisF (253 aa).

Catalysis depends on residues Asp-11 and Asp-130.

The protein belongs to the HisA/HisF family. As to quaternary structure, heterodimer of HisH and HisF.

The protein localises to the cytoplasm. The enzyme catalyses 5-[(5-phospho-1-deoxy-D-ribulos-1-ylimino)methylamino]-1-(5-phospho-beta-D-ribosyl)imidazole-4-carboxamide + L-glutamine = D-erythro-1-(imidazol-4-yl)glycerol 3-phosphate + 5-amino-1-(5-phospho-beta-D-ribosyl)imidazole-4-carboxamide + L-glutamate + H(+). Its pathway is amino-acid biosynthesis; L-histidine biosynthesis; L-histidine from 5-phospho-alpha-D-ribose 1-diphosphate: step 5/9. IGPS catalyzes the conversion of PRFAR and glutamine to IGP, AICAR and glutamate. The HisF subunit catalyzes the cyclization activity that produces IGP and AICAR from PRFAR using the ammonia provided by the HisH subunit. The chain is Imidazole glycerol phosphate synthase subunit HisF from Clostridium botulinum (strain Okra / Type B1).